Reading from the N-terminus, the 395-residue chain is Methylmalonyl-CoA decarboxylase subunit beta (395 aa).

9 helical membrane passes run 17 to 37, 43 to 63, 103 to 123, 128 to 148, 180 to 200, 230 to 250, 278 to 298, 304 to 324, and 374 to 394; these read LNMG…LAIA, LLLV…AGMM, GIFP…GPLI, SLLL…GAIA, PHLM…VPII, IIFP…AATL, INII…AEAF, LAIL…GVLL, and GPNV…LSLF.

This sequence belongs to the GcdB/MmdB/OadB family. In terms of assembly, the methylmalonyl-CoA decarboxylase is composed of four subunits: the carboxyltransferase alpha subunit (MmdA), the tunnel beta subunit (MmdB), the biotin-containing gamma subunit (MmdC) and the delta subunit (MmdD). In terms of processing, the N-terminus is blocked.

The protein localises to the cell membrane. It carries out the reaction (S)-methylmalonyl-CoA + Na(+)(in) + H(+)(out) = propanoyl-CoA + Na(+)(out) + CO2. Its function is as follows. Tunnel subunit of the sodium ion pump methylmalonyl-CoA decarboxylase, which converts the chemical energy of a decarboxylation reaction into an electrochemical gradient of Na(+) ions across the cytoplasmic membrane, thereby creating a sodium ion motive force that is used for ATP synthesis. The beta subunit catalyzes the decarboxylation of the carboxybiotin carrier protein and the coupled export of Na(+) ions. The protein is Methylmalonyl-CoA decarboxylase subunit beta of Propionigenium modestum.